The chain runs to 615 residues: Granule-bound starch synthase 1, chloroplastic/amyloplastic (615 aa).

The transit peptide at methionine 1–arginine 70 directs the protein to the chloroplast. ADP-alpha-D-glucose is bound at residue lysine 91.

Belongs to the glycosyltransferase 1 family. Bacterial/plant glycogen synthase subfamily. Found in seeds and pollen.

Its subcellular location is the plastid. The protein localises to the chloroplast. The protein resides in the amyloplast. It catalyses the reaction an NDP-alpha-D-glucose + [(1-&gt;4)-alpha-D-glucosyl](n) = [(1-&gt;4)-alpha-D-glucosyl](n+1) + a ribonucleoside 5'-diphosphate + H(+). It participates in glycan biosynthesis; starch biosynthesis. This is Granule-bound starch synthase 1, chloroplastic/amyloplastic (WAXY) from Triticum aestivum (Wheat).